We begin with the raw amino-acid sequence, 505 residues long: Probable malate:quinone oxidoreductase (505 aa).

Belongs to the MQO family. FAD is required as a cofactor.

The catalysed reaction is (S)-malate + a quinone = a quinol + oxaloacetate. The protein operates within carbohydrate metabolism; tricarboxylic acid cycle; oxaloacetate from (S)-malate (quinone route): step 1/1. This is Probable malate:quinone oxidoreductase from Pseudomonas fluorescens.